The following is a 177-amino-acid chain: Translation initiation factor IF-3 (177 aa).

The protein belongs to the IF-3 family. As to quaternary structure, monomer.

It is found in the cytoplasm. Functionally, IF-3 binds to the 30S ribosomal subunit and shifts the equilibrium between 70S ribosomes and their 50S and 30S subunits in favor of the free subunits, thus enhancing the availability of 30S subunits on which protein synthesis initiation begins. In Clostridium perfringens (strain 13 / Type A), this protein is Translation initiation factor IF-3.